The chain runs to 92 residues: MARSVWKGPFVDGYLLKKAEKVREGGRAEVIKIWSRRSTILPQFVGLTFGVYNGSKHIPVSVNEDMVGHKFGEFSPTRTYYGHGADKKAKRK.

This sequence belongs to the universal ribosomal protein uS19 family.

Functionally, protein S19 forms a complex with S13 that binds strongly to the 16S ribosomal RNA. This chain is Small ribosomal subunit protein uS19, found in Rhizobium etli (strain CIAT 652).